Consider the following 187-residue polypeptide: dITP/XTP pyrophosphatase (187 aa).

Residue 7–12 participates in substrate binding; it reads TNNPYK. Glutamate 36 and aspartate 65 together coordinate Mg(2+). Aspartate 65 serves as the catalytic Proton acceptor. Substrate is bound by residues threonine 66, 140 to 143, lysine 163, and 168 to 169; these read FGYD and HR.

Belongs to the HAM1 NTPase family. Homodimer. The cofactor is Mg(2+).

It carries out the reaction XTP + H2O = XMP + diphosphate + H(+). The enzyme catalyses dITP + H2O = dIMP + diphosphate + H(+). The catalysed reaction is ITP + H2O = IMP + diphosphate + H(+). Functionally, pyrophosphatase that catalyzes the hydrolysis of nucleoside triphosphates to their monophosphate derivatives, with a high preference for the non-canonical purine nucleotides XTP (xanthosine triphosphate), dITP (deoxyinosine triphosphate) and ITP. Seems to function as a house-cleaning enzyme that removes non-canonical purine nucleotides from the nucleotide pool, thus preventing their incorporation into DNA/RNA and avoiding chromosomal lesions. This chain is dITP/XTP pyrophosphatase, found in Pyrobaculum aerophilum (strain ATCC 51768 / DSM 7523 / JCM 9630 / CIP 104966 / NBRC 100827 / IM2).